The sequence spans 121 residues: Small ribosomal subunit protein uS12 (121 aa).

A disordered region spans residues 1 to 25 (MPTINQLVRKNRKQKKSQSKSPVLE). Basic residues predominate over residues 9–18 (RKNRKQKKSQ). Position 89 is a 3-methylthioaspartic acid (aspartate 89).

This sequence belongs to the universal ribosomal protein uS12 family. In terms of assembly, part of the 30S ribosomal subunit. Contacts proteins S8 and S17. May interact with IF1 in the 30S initiation complex.

Its function is as follows. With S4 and S5 plays an important role in translational accuracy. Interacts with and stabilizes bases of the 16S rRNA that are involved in tRNA selection in the A site and with the mRNA backbone. Located at the interface of the 30S and 50S subunits, it traverses the body of the 30S subunit contacting proteins on the other side and probably holding the rRNA structure together. The combined cluster of proteins S8, S12 and S17 appears to hold together the shoulder and platform of the 30S subunit. This chain is Small ribosomal subunit protein uS12, found in Rhodopirellula baltica (strain DSM 10527 / NCIMB 13988 / SH1).